Here is a 358-residue protein sequence, read N- to C-terminus: 3-isopropylmalate dehydrogenase 2 (358 aa).

74–87 (GPKWDKLPAESRPE) lines the NAD(+) pocket. 4 residues coordinate substrate: R94, R104, R132, and D221. D221, D245, and D249 together coordinate Mg(2+). 279–291 (GSAPDIAGQGVAN) contacts NAD(+).

The protein belongs to the isocitrate and isopropylmalate dehydrogenases family. LeuB type 1 subfamily. Homodimer. Requires Mg(2+) as cofactor. It depends on Mn(2+) as a cofactor.

The protein resides in the cytoplasm. It catalyses the reaction (2R,3S)-3-isopropylmalate + NAD(+) = 4-methyl-2-oxopentanoate + CO2 + NADH. It functions in the pathway amino-acid biosynthesis; L-leucine biosynthesis; L-leucine from 3-methyl-2-oxobutanoate: step 3/4. Catalyzes the oxidation of 3-carboxy-2-hydroxy-4-methylpentanoate (3-isopropylmalate) to 3-carboxy-4-methyl-2-oxopentanoate. The product decarboxylates to 4-methyl-2 oxopentanoate. The protein is 3-isopropylmalate dehydrogenase 2 of Dechloromonas aromatica (strain RCB).